The following is a 66-amino-acid chain: Large ribosomal subunit protein bL33c (66 aa).

This sequence belongs to the bacterial ribosomal protein bL33 family.

It localises to the plastid. It is found in the chloroplast. This Carica papaya (Papaya) protein is Large ribosomal subunit protein bL33c.